A 574-amino-acid chain; its full sequence is Meiotically up-regulated gene 72 protein (574 aa).

Residues Val-339–Ser-374 are disordered. Residue Thr-343 is modified to Phosphothreonine. Polar residues predominate over residues Arg-364–Ser-374. Residue Ser-392 is modified to Phosphoserine. Disordered regions lie at residues Thr-422–Gly-451 and Arg-495–Asp-574. A compositionally biased stretch (polar residues) spans Leu-541–Pro-554.

Its subcellular location is the cytoplasm. In terms of biological role, has a role in meiosis. This is Meiotically up-regulated gene 72 protein (mug72) from Schizosaccharomyces pombe (strain 972 / ATCC 24843) (Fission yeast).